The following is a 78-amino-acid chain: Translational regulator CsrA (78 aa).

It belongs to the CsrA/RsmA family. As to quaternary structure, homodimer; the beta-strands of each monomer intercalate to form a hydrophobic core, while the alpha-helices form wings that extend away from the core.

It is found in the cytoplasm. Its function is as follows. A translational regulator that binds mRNA to regulate translation initiation and/or mRNA stability. Usually binds in the 5'-UTR at or near the Shine-Dalgarno sequence preventing ribosome-binding, thus repressing translation. Its main target seems to be the major flagellin gene, while its function is anatagonized by FliW. This Natranaerobius thermophilus (strain ATCC BAA-1301 / DSM 18059 / JW/NM-WN-LF) protein is Translational regulator CsrA.